A 64-amino-acid polypeptide reads, in one-letter code: Large ribosomal subunit protein bL33c (64 aa).

It belongs to the bacterial ribosomal protein bL33 family.

Its subcellular location is the plastid. It localises to the chloroplast. The sequence is that of Large ribosomal subunit protein bL33c (rpl33) from Trieres chinensis (Marine centric diatom).